Reading from the N-terminus, the 221-residue chain is Zingipain-1 (221 aa).

3 cysteine pairs are disulfide-bonded: Cys24/Cys65, Cys58/Cys98, and Cys155/Cys206. The active site involves Cys27. N-linked (GlcNAc...) asparagine glycosylation is found at Asn95 and Asn156. Residues His161 and Asn181 contribute to the active site.

Belongs to the peptidase C1 family.

The catalysed reaction is Preferential cleavage of peptides with a proline residue at the P2 position.. Functionally, cysteine proteinase with a high level of diversity in substrate specificity, an amino acid bearing a proline residue at the P2 position is preferred. In Zingiber officinale (Ginger), this protein is Zingipain-1.